Consider the following 80-residue polypeptide: MKKPLRQQNRQIISYVPRTEPAPPEHAIKMDSFRDVWMLRGKYVAFVLMGESFLRSPAFTVPESAQRWANQIRQENEVEE.

Belongs to the CedA family.

Functionally, activates the cell division inhibited by chromosomal DNA over-replication. This is Cell division activator CedA from Escherichia coli O1:K1 / APEC.